A 142-amino-acid chain; its full sequence is Group IIE secretory phospholipase A2 (142 aa).

The signal sequence occupies residues 1-19 (MKSPHVLVFLCLLVALVTG). Residues Asp41, Gly43, Tyr45, Gly47, and Gly49 each contribute to the Ca(2+) site. Disulfide bonds link Cys44-Cys135, Cys46-Cys62, Cys61-Cys115, Cys67-Cys142, Cys68-Cys108, Cys77-Cys101, and Cys95-Cys106. The active site involves His65. Asp66 contacts Ca(2+). Asp109 is a catalytic residue. Positions 130 and 132 each coordinate Ca(2+).

This sequence belongs to the phospholipase A2 family. Requires Ca(2+) as cofactor. As to expression, restricted to the brain, heart, lung, and placenta.

Its subcellular location is the secreted. It localises to the cytoplasm. The catalysed reaction is a 1,2-diacyl-sn-glycero-3-phosphoethanolamine + H2O = a 1-acyl-sn-glycero-3-phosphoethanolamine + a fatty acid + H(+). It catalyses the reaction 1-hexadecanoyl-2-(9Z-octadecenoyl)-sn-glycero-3-phosphoethanolamine + H2O = 1-hexadecanoyl-sn-glycero-3-phosphoethanolamine + (9Z)-octadecenoate + H(+). It carries out the reaction 1-hexadecanoyl-2-(9Z,12Z-octadecadienoyl)-sn-glycero-3-phosphoethanolamine + H2O = 1-hexadecanoyl-sn-glycero-3-phosphoethanolamine + (9Z,12Z)-octadecadienoate + H(+). The enzyme catalyses 1-hexadecanoyl-2-(5Z,8Z,11Z,14Z-eicosatetraenoyl)-sn-glycero-3-phosphoethanolamine + H2O = 1-hexadecanoyl-sn-glycero-3-phosphoethanolamine + (5Z,8Z,11Z,14Z)-eicosatetraenoate + H(+). The catalysed reaction is 1,2-dihexadecanoyl-sn-glycero-3-phospho-(1'-sn-glycerol) + H2O = 1-hexadecanoyl-sn-glycero-3-phospho-(1'-sn-glycerol) + hexadecanoate + H(+). It catalyses the reaction 1-hexadecanoyl-2-(9Z-octadecenoyl)-sn-glycero-3-phosphoglycerol + H2O = 1-hexadecanoyl-sn-glycero-3-phosphoglycerol + (9Z)-octadecenoate + H(+). It carries out the reaction a 1,2-diacyl-sn-glycero-3-phosphocholine + H2O = a 1-acyl-sn-glycero-3-phosphocholine + a fatty acid + H(+). The enzyme catalyses 1,2-dihexadecanoyl-sn-glycero-3-phosphocholine + H2O = 1-hexadecanoyl-sn-glycero-3-phosphocholine + hexadecanoate + H(+). The catalysed reaction is 1-hexadecanoyl-2-(9Z-octadecenoyl)-sn-glycero-3-phosphocholine + H2O = 1-hexadecanoyl-sn-glycero-3-phosphocholine + (9Z)-octadecenoate + H(+). It catalyses the reaction 1-hexadecanoyl-2-(9Z,12Z-octadecadienoyl)-sn-glycero-3-phosphocholine + H2O = (9Z,12Z)-octadecadienoate + 1-hexadecanoyl-sn-glycero-3-phosphocholine + H(+). It carries out the reaction 1-hexadecanoyl-2-(4Z,7Z,10Z,13Z,16Z,19Z-docosahexaenoyl)-sn-glycero-3-phosphocholine + H2O = (4Z,7Z,10Z,13Z,16Z,19Z)-docosahexaenoate + 1-hexadecanoyl-sn-glycero-3-phosphocholine + H(+). Its function is as follows. Secretory calcium-dependent phospholipase A2 that primarily targets extracellular phospholipids. Hydrolyzes the ester bond of the fatty acyl group attached at sn-2 position of phospholipids (phospholipase A2 activity), releasing various unsaturated fatty acids including oleoate, linoleoate, arachidonate, docosahexaenoate and lysophosphatidylethanolamines in preference to lysophosphatidylcholines. In response to high-fat diet, hydrolyzes minor lipoprotein phospholipids including phosphatidylserines, phosphatidylinositols and phosphatidylglycerols, altering lipoprotein composition and fat storage in adipose tissue and liver. May act in an autocrine and paracrine manner. Contributes to lipid remodeling of cellular membranes and generation of lipid mediators involved in pathogen clearance. Cleaves sn-2 fatty acyl chains of phosphatidylglycerols and phosphatidylethanolamines, which are major components of membrane phospholipids in bacteria. Acts as a hair follicle phospholipase A2. Selectively releases lysophosphatidylethanolamines (LPE) and various unsaturated fatty acids in skin to regulate hair follicle homeostasis. May regulate the inflammatory response by releasing arachidonate, a precursor of prostaglandins and leukotrienes. Upon allergen exposure, may participate in allergic inflammatory response by enhancing leukotriene C4 synthesis and degranulation in mast cells. This is Group IIE secretory phospholipase A2 (PLA2G2E) from Homo sapiens (Human).